We begin with the raw amino-acid sequence, 257 residues long: Granzyme M (257 aa).

The signal sequence occupies residues 1–23 (MEACVSSLLVLALGALSVGSSFG). Residues 24–25 (TQ) constitute a propeptide, activation peptide. A Peptidase S1 domain is found at 26–254 (IIGGREVIPH…YVSWIRKVTG (229 aa)). Cys-51 and Cys-67 form a disulfide bridge. Catalysis depends on charge relay system residues His-66 and Asp-111. Intrachain disulfides connect Cys-145–Cys-213, Cys-176–Cys-192, and Cys-203–Cys-230. N-linked (GlcNAc...) asparagine glycosylation is present at Asn-177. The active-site Charge relay system is Ser-207.

This sequence belongs to the peptidase S1 family. Granzyme subfamily. In terms of tissue distribution, highly and constitutively expressed in activated natural killer (NK) cells.

The protein localises to the secreted. It localises to the cytoplasmic granule. Cleaves peptide substrates after methionine, leucine, and norleucine. Physiological substrates include EZR, alpha-tubulins and the apoptosis inhibitor BIRC5/Survivin. Promotes caspase activation and subsequent apoptosis of target cells. The chain is Granzyme M (GZMM) from Homo sapiens (Human).